A 227-amino-acid chain; its full sequence is Thymidylate kinase (227 aa).

ATP is bound at residue 7–14 (GIEGSGKT).

Belongs to the thymidylate kinase family.

It catalyses the reaction dTMP + ATP = dTDP + ADP. Its function is as follows. Phosphorylation of dTMP to form dTDP in both de novo and salvage pathways of dTTP synthesis. The sequence is that of Thymidylate kinase from Desulforapulum autotrophicum (strain ATCC 43914 / DSM 3382 / VKM B-1955 / HRM2) (Desulfobacterium autotrophicum).